A 312-amino-acid chain; its full sequence is D-alanine--D-alanine ligase (312 aa).

The ATP-grasp domain occupies 108-308 (KLVWQQTGIP…YSELVVKVLS (201 aa)). Residue 138 to 193 (AAKLGVPLFVKPASEGSSVAVEKVKSADALPAALEEAAKHDKIVIVEKSIEGGGEY) participates in ATP binding. D262, E275, and N277 together coordinate Mg(2+).

It belongs to the D-alanine--D-alanine ligase family. Mg(2+) serves as cofactor. The cofactor is Mn(2+).

It is found in the cytoplasm. The enzyme catalyses 2 D-alanine + ATP = D-alanyl-D-alanine + ADP + phosphate + H(+). It functions in the pathway cell wall biogenesis; peptidoglycan biosynthesis. In terms of biological role, cell wall formation. In Burkholderia pseudomallei (strain 668), this protein is D-alanine--D-alanine ligase.